A 464-amino-acid polypeptide reads, in one-letter code: MMARRDPKSWAKRLVRAQTLQKQRRARVGPRAPPPDEEDPRLKCKNCGAFGHTARSTRCPMKCWKAALVPATLGKKEGKENLKPWKPRAEANPGPLNKDKGEKEERPRQQDPQRKALLHMFSGKPPEKPLPNGKGSTESSDYLRVASGPMPVHTTSKRPRLDPVLADRSATEMSGRGSVLASLSPLRKTSLSSSSSLGPKERQTGAAADMPQPAVRHQGPEPLLEVKPTHSRPEGGCQEVPQAASKTHGLLQASRPQAQDKRPAVTPQPCPPAATHSLGLGSNLSFGPGAKKPAQAPIQACLNFPKKPRLGPFQIPESAIQGGELGAPENLQPPPAATELGPSTSPQMGRRTPAQVPSVDRQPPHSRPCLPTAQACTMSHHSAAGHDGAQPLRVLFRRLENGRWSSSLLAAPSFHSPEKPGAFLAQSPHVSEKSEAPCVRVPPSVLYEDLQVSSSSEDSDSDLE.

3 disordered regions span residues 1 to 43 (MMAR…PRLK), 70 to 389 (PATL…HDGA), and 415 to 437 (HSPE…SEAP). 2 stretches are compositionally biased toward basic and acidic residues: residues 74–89 (GKKE…KPRA) and 97–114 (NKDK…DPQR). The span at 182–197 (SLSPLRKTSLSSSSSL) shows a compositional bias: low complexity.

Belongs to the FAM90 family.

The sequence is that of Protein FAM90A22 from Homo sapiens (Human).